The chain runs to 114 residues: Iron-sulfur cluster insertion protein ErpA (114 aa).

Iron-sulfur cluster contacts are provided by cysteine 42, cysteine 106, and cysteine 108.

The protein belongs to the HesB/IscA family. Homodimer. It depends on iron-sulfur cluster as a cofactor.

Required for insertion of 4Fe-4S clusters for at least IspG. The chain is Iron-sulfur cluster insertion protein ErpA from Haemophilus influenzae (strain PittGG).